The following is a 283-amino-acid chain: Cardiolipin synthase (CMP-forming) (283 aa).

3 helical membrane-spanning segments follow: residues 83–103 (PFIG…LFAF), 155–175 (VSIA…ALFI), and 209–229 (LSKW…LLLL).

This sequence belongs to the CDP-alcohol phosphatidyltransferase class-I family. As to quaternary structure, may be found in a large complex. Mg(2+) is required as a cofactor.

It is found in the mitochondrion inner membrane. The enzyme catalyses a CDP-1,2-diacyl-sn-glycerol + a 1,2-diacyl-sn-glycero-3-phospho-(1'-sn-glycerol) = a cardiolipin + CMP + H(+). Functionally, catalyzes the synthesis of cardiolipin (CL) (diphosphatidylglycerol) by specifically transferring a phosphatidyl group from CDP-diacylglycerol to phosphatidylglycerol (PG). CL is a key phospholipid in mitochondrial membranes and plays important roles in maintaining the functional integrity and dynamics of mitochondria under both optimal and stress conditions. The protein is Cardiolipin synthase (CMP-forming) (CRD1) of Saccharomyces cerevisiae (strain ATCC 204508 / S288c) (Baker's yeast).